A 430-amino-acid polypeptide reads, in one-letter code: UPF0597 protein BDI_1130 (430 aa).

It belongs to the UPF0597 family.

The polypeptide is UPF0597 protein BDI_1130 (Parabacteroides distasonis (strain ATCC 8503 / DSM 20701 / CIP 104284 / JCM 5825 / NCTC 11152)).